The following is a 124-amino-acid chain: uncharacterized protein (124 aa).

The first 18 residues, 1–18, serve as a signal peptide directing secretion; it reads MHIIKTLISVGVAFSLSA. Residue Cys-19 is the site of N-palmitoyl cysteine attachment. The S-diacylglycerol cysteine moiety is linked to residue Cys-19.

The protein resides in the cell membrane. This is an uncharacterized protein from Pasteurella multocida (strain Pm70).